The chain runs to 324 residues: Beta-ketoacyl-[acyl-carrier-protein] synthase III (324 aa).

Active-site residues include C113 and H251. Residues 252-256 (QANKR) are ACP-binding. Residue N281 is part of the active site.

This sequence belongs to the thiolase-like superfamily. FabH family. As to quaternary structure, homodimer.

The protein resides in the cytoplasm. The catalysed reaction is malonyl-[ACP] + acetyl-CoA + H(+) = 3-oxobutanoyl-[ACP] + CO2 + CoA. The protein operates within lipid metabolism; fatty acid biosynthesis. Functionally, catalyzes the condensation reaction of fatty acid synthesis by the addition to an acyl acceptor of two carbons from malonyl-ACP. Catalyzes the first condensation reaction which initiates fatty acid synthesis and may therefore play a role in governing the total rate of fatty acid production. Possesses both acetoacetyl-ACP synthase and acetyl transacylase activities. Its substrate specificity determines the biosynthesis of branched-chain and/or straight-chain of fatty acids. In Bartonella bacilliformis (strain ATCC 35685 / KC583 / Herrer 020/F12,63), this protein is Beta-ketoacyl-[acyl-carrier-protein] synthase III.